A 185-amino-acid chain; its full sequence is Ribosome-recycling factor (185 aa).

Belongs to the RRF family.

It is found in the cytoplasm. Functionally, responsible for the release of ribosomes from messenger RNA at the termination of protein biosynthesis. May increase the efficiency of translation by recycling ribosomes from one round of translation to another. The polypeptide is Ribosome-recycling factor (Aromatoleum aromaticum (strain DSM 19018 / LMG 30748 / EbN1) (Azoarcus sp. (strain EbN1))).